The following is a 173-amino-acid chain: Photosystem I assembly protein Ycf3 (173 aa).

3 TPR repeats span residues Ala-35 to Thr-68, Gly-72 to Leu-105, and Gly-120 to Asn-153.

It belongs to the Ycf3 family.

The protein localises to the cellular thylakoid membrane. Its function is as follows. Essential for the assembly of the photosystem I (PSI) complex. May act as a chaperone-like factor to guide the assembly of the PSI subunits. This Nostoc punctiforme (strain ATCC 29133 / PCC 73102) protein is Photosystem I assembly protein Ycf3.